The primary structure comprises 68 residues: Beta-defensin 1 (68 aa).

Positions 1–21 are cleaved as a signal peptide; sequence MRTSYLLLFTLCLLLSEMASG. Positions 22–32 are excised as a propeptide; sequence DNFLTGLGHRS. 3 disulfides stabilise this stretch: Cys37-Cys66, Cys44-Cys59, and Cys49-Cys67.

The protein belongs to the beta-defensin family. Monomer. Homodimer.

It is found in the secreted. The protein resides in the membrane. Functionally, has bactericidal activity. May act as a ligand for C-C chemokine receptor CCR6. Positively regulates the sperm motility and bactericidal activity in a CCR6-dependent manner. Binds to CCR6 and triggers Ca2+ mobilization in the sperm which is important for its motility. This chain is Beta-defensin 1 (DEFB1), found in Allochrocebus preussi (Preuss's monkey).